Consider the following 454-residue polypeptide: MVFCLSSEEPRRPLRSDMVHFQASEVQQLLHNKFVVILGDSIQRAVYKDLVLLLQKDSLLTAAQLKAKGELSFEQDQLVAGGQLGELHNGTQYREVRQFCSGSGHHLVRFYFLTRVYSEYLEDVLEELTYGPAPDLVIINSCLWDLSRYGRCSMESYRENLERVFVRMDQVLPDSCLLVWNMAMPLGERITGGFLLPELQPLAGSLRRDVVEGNFYSATLAGDHCFDVLDLHFHFRHAVQHRHRDGVHWDQHAHRHLSHLLLTHVADAWGVELPKRGYPPDPWIEDWAEMNHPFQGSHRQTPDFGEHLALLPPPPSSLPPPMPFPYPLPQPSPPPLFPPLPQDTPFFPGQPFPPHEFFNYNPVEDFSMPPHLGCGPGVNFVPGPLPPPIPGPNPHGQHWGPVVHRGMPRYVPNSPYHVRRMGGPCRQRLRHSERLIHTYKLDRRPPAHSGTWPG.

Belongs to the PC-esterase family.

The protein is PC-esterase domain-containing protein 1A (PCED1A) of Homo sapiens (Human).